A 633-amino-acid chain; its full sequence is ATP-dependent clpX-like chaperone, mitochondrial (633 aa).

Residues 1-56 (MPSCGACTCGAAAVRLITSSLASAQRGISGGRIHMSVLGRLGTFETQILQRAPLRS) constitute a mitochondrion transit peptide. The interval 68 to 100 (DGISKDGSGDGNKKSASEGSSKKSGSGNSGKGG) is disordered. Positions 69–83 (GISKDGSGDGNKKSA) are enriched in basic and acidic residues. The span at 84–93 (SEGSSKKSGS) shows a compositional bias: low complexity. The ClpX-type ZB domain maps to 93-146 (SGNSGKGGNQLRCPKCGDLCTHVETFVSSTRFVKCEKCHHFFVVLSEADSKKSI). The Zn(2+) site is built by Cys-105, Cys-108, Cys-127, and Cys-130. ATP is bound at residue 294–301 (PTGSGKTL). Lys-437 is modified (N6-acetyllysine). The segment covering 598-610 (KEPGYIRAPTKES) has biased composition (basic and acidic residues). The segment at 598-633 (KEPGYIRAPTKESSEEEYDSGVEEEGWPRQADAANS) is disordered. A compositionally biased stretch (acidic residues) spans 611–622 (SEEEYDSGVEEE). Ser-617 carries the phosphoserine modification.

Belongs to the ClpX chaperone family. In terms of assembly, homohexamer that forms a ring structure; this hexamerization requires ATP binding. Component of the ClpXP complex formed by the assembly of two CLPP heptameric rings with two CLPX hexameric rings, giving rise to a symmetrical structure with two central CLPP rings flanked by a CLPX ring at either end of the complex. Interacts with TFAM. In terms of tissue distribution, higher expression in skeletal muscle and heart and to a lesser extent in liver, brain, placenta, lung, kidney and pancreas.

Its subcellular location is the mitochondrion. It is found in the mitochondrion matrix. The protein resides in the mitochondrion nucleoid. It catalyses the reaction ATP + H2O = ADP + phosphate + H(+). Functionally, ATP-dependent chaperone that functions as an unfoldase. As part of the ClpXP protease complex, it recognizes specific protein substrates, unfolds them using energy derived from ATP hydrolysis, and then translocates them to the proteolytic subunit (CLPP) of the ClpXP complex for degradation. Thanks to its chaperone activity, it also functions in the incorporation of the pyridoxal phosphate cofactor into 5-aminolevulinate synthase, thereby activating 5-aminolevulinate (ALA) synthesis, the first step in heme biosynthesis. This chaperone is also involved in the control of mtDNA nucleoid distribution, by regulating mitochondrial transcription factor A (TFAM) activity. The sequence is that of ATP-dependent clpX-like chaperone, mitochondrial from Homo sapiens (Human).